A 204-amino-acid chain; its full sequence is Large ribosomal subunit protein eL15 (204 aa).

Residues 172–182 (RGLRGRGHLHN) show a composition bias toward basic residues. The interval 172 to 204 (RGLRGRGHLHNKAPPSRRANWKRNQTLSLPRYR) is disordered. Positions 193–204 (KRNQTLSLPRYR) are enriched in polar residues.

It belongs to the eukaryotic ribosomal protein eL15 family.

In Petunia hybrida (Petunia), this protein is Large ribosomal subunit protein eL15 (RPL15).